A 730-amino-acid chain; its full sequence is Synaptogenesis protein syg-1 (730 aa).

An N-terminal signal peptide occupies residues 1 to 18; it reads MVRWQTWPLLLLFQLVTC. At 19 to 551 the chain is on the extracellular side; that stretch reads QQLQQRIVEA…WIVITAKFDR (533 aa). Ig-like domains follow at residues 23–123, 131–265, 270–352, 357–433, and 441–540; these read QRIV…AKLT, PKIV…VKLS, PQIN…IKLN, ARIM…QILS, and PPTV…RNIL. 5 disulfide bridges follow: C44/C104, C152/C246, C292/C336, C378/C420, and C462/C519. 2 N-linked (GlcNAc...) asparagine glycosylation sites follow: N93 and N206. The helical transmembrane segment at 552–572 threads the bilayer; that stretch reads MVALAIISAGVLLVSLLCCLC. The Cytoplasmic segment spans residues 573–730; that stretch reads MCRSNCRSRK…RPISRTSTHV (158 aa).

The protein belongs to the immunoglobulin superfamily. In terms of assembly, interacts with skr-1. Interacts with syg-2. Interacts with the WAVE regulatory complex; the interaction leads to formation of a synaptic F-actin network that is required for synapse formation and axon branching. Expression in head motor neurons, occasionally in HSN neurons and weakly in other cells in the vulval region. Expressed in the primary synapse region of HSNL motor neuron.

The protein resides in the cell membrane. It localises to the cell projection. The protein localises to the axon. It is found in the synapse. In terms of biological role, cell adhesion protein. Involved in synapse formation in the HSNL egg-laying motor neuron. Inhibits assembly of the SCF(sel-10) E3 ubiquitin ligase complex at synapses, and protects them from elimination. Also required for F-actin assembly at the synaptic region and for axon branch formation. The sequence is that of Synaptogenesis protein syg-1 from Caenorhabditis elegans.